We begin with the raw amino-acid sequence, 480 residues long: F-box/LRR-repeat protein 14 (480 aa).

The 48-residue stretch at 11–58 (DRQMDELPDHLVWDILSKLHTTDDRNSLSLSCKRFFSLDNEQRYSLRI) folds into the F-box domain. 15 LRR repeats span residues 61 to 86 (GLVPASDALLSLCRRFPNLSKVEIIY), 94 to 119 (GKQVDDQGLLVLTTNCHSLTDLTLSF), 120 to 144 (CTFITDVGIGHLSSCPELSSLKLNF), 145 to 170 (APRITGCGVLSLAVGCKKLRRLHLIR), 171 to 196 (CLNVASVEWLEYFGKLETLEELCIKN), 197 to 222 (CRAIGEGDLIKLRNSWRKLTSLQFEV), 229 to 257 (MKVYDQLDVERWPKQLVPCDSLVELSLGN), 258 to 283 (CIIAPGRGLACVLRNCKNLEKLHLDM), 284 to 309 (CTGVSDSDIIALVQKASHLRSISLRV), 322 to 347 (TLRLTDESLSAIAQHCSKLESFKISF), 355 to 379 (LFSFTLQGIITLIQKCPVRELSLDH), 380 to 404 (VCVFNDMGMEALCSAQKLEILELVH), 405 to 429 (CQEVSDEGLILVSQFPSLNVLKLSK), 430 to 454 (CLGVTDDGMRPLVGSHKLELLVVED), and 455 to 480 (CPQVSRRGVHGAATSVSFKQDLSWMY).

The protein is F-box/LRR-repeat protein 14 (FBL14) of Arabidopsis thaliana (Mouse-ear cress).